A 148-amino-acid polypeptide reads, in one-letter code: Calcium-regulated heat stable protein 1 (148 aa).

Residues methionine 1 to proline 12 show a composition bias toward pro residues. The segment at methionine 1 to arginine 47 is disordered. At serine 2 the chain carries N-acetylserine. Residues serine 31, serine 33, and serine 42 each carry the phosphoserine modification. The residue at position 46 (threonine 46) is a Phosphothreonine. Serine 53 and serine 59 each carry phosphoserine. The 68-residue stretch at valine 63–threonine 130 folds into the CSD domain. The residue at position 147 (serine 147) is a Phosphoserine.

Homodimer. Interacts with STYX. In terms of processing, can be phosphorylated by DYRK2 (in vitro). Dephosphorylated by calcineurin in a Ca(2+) dependent manner.

The protein resides in the cytoplasm. It localises to the P-body. The protein localises to the cytoplasmic granule. Binds mRNA and regulates the stability of target mRNA. This is Calcium-regulated heat stable protein 1 (Carhsp1) from Mus musculus (Mouse).